Consider the following 356-residue polypeptide: Dihydroorotate dehydrogenase (quinone) (356 aa).

FMN is bound by residues 60-64 (AGFDK) and Ser-84. Residue Lys-64 participates in substrate binding. 109–113 (NRFGF) provides a ligand contact to substrate. Residues Asn-140 and Asn-171 each contribute to the FMN site. Asn-171 serves as a coordination point for substrate. Catalysis depends on Ser-174, which acts as the Nucleophile. Asn-176 provides a ligand contact to substrate. Residues Lys-216 and Gly-244 each contribute to the FMN site. 245-246 (NT) lines the substrate pocket. FMN is bound by residues Gly-267, Gly-296, and 317–318 (YS).

Belongs to the dihydroorotate dehydrogenase family. Type 2 subfamily. As to quaternary structure, monomer. It depends on FMN as a cofactor.

The protein localises to the cell membrane. The enzyme catalyses (S)-dihydroorotate + a quinone = orotate + a quinol. Its pathway is pyrimidine metabolism; UMP biosynthesis via de novo pathway; orotate from (S)-dihydroorotate (quinone route): step 1/1. Its function is as follows. Catalyzes the conversion of dihydroorotate to orotate with quinone as electron acceptor. The polypeptide is Dihydroorotate dehydrogenase (quinone) (Azorhizobium caulinodans (strain ATCC 43989 / DSM 5975 / JCM 20966 / LMG 6465 / NBRC 14845 / NCIMB 13405 / ORS 571)).